Reading from the N-terminus, the 346-residue chain is FMRFamide-related peptides type HF-1 (346 aa).

The first 19 residues, 1–19 (MTSLCLTIAPAVLSLICLS), serve as a signal peptide directing secretion. The propeptide occupies 20 to 45 (SYGWAEDNNGIHTLDDGDNDPFFRHN). Residue phenylalanine 51 is modified to Phenylalanine amide. Positions 54 to 94 (AFVPLWDNADDSLVRKNLLTHWSEFPLSPALSSSDVFSRNS) are excised as a propeptide. Phenylalanine 100 is subject to Phenylalanine amide. A propeptide spanning residues 103–109 (SYPPYQD) is cleaved from the precursor. Phenylalanine 115 is subject to Phenylalanine amide. A propeptide spanning residues 118–203 (SHQPDIDEYL…EILSNEDDLE (86 aa)) is cleaved from the precursor. Positions 137–185 (YRKRRSEDGDSKEDGLNRVARSADANQQSKNTQSNKFGKDLQKRETKKE) are disordered. Basic and acidic residues predominate over residues 141–152 (RSEDGDSKEDGL). Over residues 160–172 (DANQQSKNTQSNK) the composition is skewed to polar residues. Basic and acidic residues predominate over residues 173–185 (FGKDLQKRETKKE). A phenylalanine amide mark is found at phenylalanine 209 and phenylalanine 216. The propeptide occupies 219-226 (GDEDESYD). Phenylalanine amide is present on phenylalanine 232. Residues 235–243 (SLRHDQEFE) constitute a propeptide that is removed on maturation. 2 positions are modified to phenylalanine amide: phenylalanine 249 and phenylalanine 256. Positions 259-267 (GDEDDAREE) are excised as a propeptide. Phenylalanine amide is present on phenylalanine 273. Residues 276–283 (SSNEDEDI) constitute a propeptide that is removed on maturation. Phenylalanine 290 bears the Phenylalanine amide mark. Positions 293–301 (SGNEDGDVD) are excised as a propeptide. 2 positions are modified to phenylalanine amide: phenylalanine 307 and phenylalanine 314. A propeptide spanning residues 317 to 325 (SEKEDGDVD) is cleaved from the precursor. Residues phenylalanine 331 and phenylalanine 338 each carry the phenylalanine amide modification. Residues 341–346 (GDSETS) constitute a propeptide that is removed on maturation.

Belongs to the FARP (FMRFamide related peptide) family. Central nervous system.

It is found in the secreted. Can function as both cardioregulatory hormones and transmitters and may regulate cardiovascular function. The sequence is that of FMRFamide-related peptides type HF-1 from Cornu aspersum (Brown garden snail).